Reading from the N-terminus, the 577-residue chain is Arginine--tRNA ligase (577 aa).

The 'HIGH' region signature appears at 122 to 132 (PNVAKEMHVGH).

This sequence belongs to the class-I aminoacyl-tRNA synthetase family. In terms of assembly, monomer.

It localises to the cytoplasm. The enzyme catalyses tRNA(Arg) + L-arginine + ATP = L-arginyl-tRNA(Arg) + AMP + diphosphate. This is Arginine--tRNA ligase from Escherichia coli O127:H6 (strain E2348/69 / EPEC).